The sequence spans 693 residues: Probable L-type lectin-domain containing receptor kinase VI.1 (693 aa).

Residues 1–22 (MGIARSINSFMFFFFLMILSNA) form the signal peptide. Residues N21, N44, N71, N89, N141, N180, and N223 are each glycosylated (N-linked (GlcNAc...) asparagine). The Extracellular segment spans residues 23–311 (SKSSVLAEAT…SNKKGYNSQV (289 aa)). Residues 33 to 279 (TAKFTFIGFK…AHYVMGWSFS (247 aa)) form a legume-lectin like region. Residues 312–332 (IVLIVALSIVTLVLLVLLFIF) traverse the membrane as a helical segment. The Cytoplasmic segment spans residues 333-693 (VMYKRRIQEE…VSSSSIVSGR (361 aa)). The Protein kinase domain occupies 368–642 (FKESEIIGTG…LRYLNGEENV (275 aa)). Residues 374-382 (IGTGGFGIV) and K396 each bind ATP. D495 functions as the Proton acceptor in the catalytic mechanism. Positions 670–693 (DRASSSNTFSSFSNVSSSSIVSGR) are disordered.

This sequence in the C-terminal section; belongs to the protein kinase superfamily. Ser/Thr protein kinase family. In the N-terminal section; belongs to the leguminous lectin family.

It is found in the cell membrane. The enzyme catalyses L-seryl-[protein] + ATP = O-phospho-L-seryl-[protein] + ADP + H(+). It carries out the reaction L-threonyl-[protein] + ATP = O-phospho-L-threonyl-[protein] + ADP + H(+). The sequence is that of Probable L-type lectin-domain containing receptor kinase VI.1 (LECRK61) from Arabidopsis thaliana (Mouse-ear cress).